Consider the following 142-residue polypeptide: Inner membrane protein YqaA (142 aa).

The Cytoplasmic portion of the chain corresponds to 1 to 2; sequence MS. Residues 3-23 form a helical membrane-spanning segment; it reads EALSLFSLFASSFLSATLLPG. The Periplasmic portion of the chain corresponds to 24 to 26; sequence NSE. Residues 27–47 traverse the membrane as a helical segment; the sequence is VVLVAMLLSGISHPWVLVLTA. Over 48 to 86 the chain is Cytoplasmic; the sequence is TMGNSLGGLTNVILGRFFPLRKTSRWQEKATGWLKRYGA. The helical transmembrane segment at 87-107 threads the bilayer; sequence VTLLLSWMPVVGDLLCLLAGW. Residues 108 to 142 are Periplasmic-facing; the sequence is MRISWGPVIFFLCLGKALRYVAVAAATVQGMMWWH.

The protein to H.influenzae HI_0489.

It is found in the cell inner membrane. The sequence is that of Inner membrane protein YqaA (yqaA) from Escherichia coli (strain K12).